Consider the following 314-residue polypeptide: uncharacterized protein (314 aa).

2 stretches are compositionally biased toward basic residues: residues 1–16 (MAGN…KAGT) and 49–65 (AAKR…RRPA). The disordered stretch occupies residues 1-73 (MAGNSKRRGA…PARKTDETEL (73 aa)). Residues Gly266, Ile286, and Leu295 each coordinate S-adenosyl-L-methionine.

It belongs to the class IV-like SAM-binding methyltransferase superfamily. RNA methyltransferase TrmH family.

This is an uncharacterized protein from Mycobacterium sp. (strain KMS).